The sequence spans 282 residues: Transcription factor MYB1 (282 aa).

HTH myb-type domains follow at residues 9–61 and 62–116; these read KEGL…LNYL and RPDI…SKKV. 2 consecutive DNA-binding regions (H-T-H motif) follow at residues 37–61 and 89–112; these read WRDL…LNYL and WSLI…NTYL. The segment at 258–282 is disordered; it reads EDDWKQNGGKDELMGGGNGGPSSVS. The span at 260-270 shows a compositional bias: basic and acidic residues; it reads DWKQNGGKDEL. Over residues 271–282 the composition is skewed to gly residues; it reads MGGGNGGPSSVS.

It is found in the nucleus. Functionally, transcription activator involved in the spatiotemporal regulation of flavonoid biosynthesis specifically in the corms of Montbretia. Activates the promoters of enzymes involved in the biosynthesis of the flavonol kaempferol and the flavonol-glycoside kaempferol-rhamnoside. The chain is Transcription factor MYB1 from Crocosmia x crocosmiiflora (Montbretia).